The following is a 133-amino-acid chain: uncharacterized protein (133 aa).

The chain crosses the membrane as a helical span at residues 36-56 (LPMLIALACIFLLLATCLLFM). The tract at residues 105 to 133 (HGRPTVPRQPLPGPEDNRSHCDYMESTKM) is disordered. Positions 119–133 (EDNRSHCDYMESTKM) are enriched in basic and acidic residues.

The protein localises to the membrane. This is an uncharacterized protein from Homo sapiens (Human).